The sequence spans 212 residues: Ribosomal RNA small subunit methyltransferase G (212 aa).

S-adenosyl-L-methionine-binding positions include G75, L80, 126 to 127 (AQ), and R141.

This sequence belongs to the methyltransferase superfamily. RNA methyltransferase RsmG family.

It is found in the cytoplasm. Specifically methylates the N7 position of guanine in position 518 of 16S rRNA. This chain is Ribosomal RNA small subunit methyltransferase G, found in Beutenbergia cavernae (strain ATCC BAA-8 / DSM 12333 / CCUG 43141 / JCM 11478 / NBRC 16432 / NCIMB 13614 / HKI 0122).